A 764-amino-acid polypeptide reads, in one-letter code: MGSNLSPQLCLMPFILGLLSGGVTTTPWPLAQPQESCSLEGVEIKGGSFRLLQEGQALEYVCPSGFYPYPVQTRTCRSTGSWSTLKTQVQKTVRKAECRAIHCPRPHDFENGEYWPRSPYYNVSDEISFHCYDGYTLRGSANRTCQVNGRWSGQTAICDNGAGYCSNPGIPIGTRKVGSQYRLEDSVTYHCSRGLTLRGSQRRTCQEGGSWSGTEPSCQDSFMYDTPQEVAEAFLSSLTETIEGVDAEDGHGPGEQQKRKIVLDPSGSMNIYLVLDGSDSIGASNFTGAKKCLVNLIEKVASYGVKPRYGLVTYATHPKIWVKVSDPDSSNADWVTKQLNEINYEDHKLKSGTNTKKALQAVYSMMSWPDDIPPEGWNRTRHVIILMTDGLHNMGGDPITVIDEIRDLLYIGKDRKNPREDYLDVYVFGVGPLVNQVNINALASKKDNEQHVFKVKDMENLEDVFYQMIDESQSLSLCGMVWEHRKGTDYHKQPWQAKISVIRPSKGHESCMGAVVSEYFVLTAAHCFTVDDKEHSIKVSVGGEKRDLEIEVVLFHPNYNINGKKAAGIPEFYDYDVALIKLKNKLKYGQTIRPICLPCTEGTTRALRLPPTTTCQQQKEELLPAQDIKALFVSEEEKKLTRKEVYIKNGDKKGSCERDAQYAPGYDKVKDISEVVTPRFLCTGGVSPYADPNTCRGDSGGPLIVHKRSRFIQVGVISWGVVDVCKNQKRQKQVPAHARDFHINLFQVLPWLKEKLQDEDLGFL.

A signal peptide spans 1 to 25 (MGSNLSPQLCLMPFILGLLSGGVTT). Sushi domains lie at 35–100 (ESCS…ECRA), 101–160 (IHCP…ICDN), and 163–220 (GYCS…SCQD). 6 cysteine pairs are disulfide-bonded: cysteine 37–cysteine 76, cysteine 62–cysteine 98, cysteine 103–cysteine 145, cysteine 131–cysteine 158, cysteine 165–cysteine 205, and cysteine 191–cysteine 218. Residues asparagine 122 and asparagine 142 are each glycosylated (N-linked (GlcNAc...) asparagine). The VWFA domain maps to 270-469 (NIYLVLDGSD…NLEDVFYQMI (200 aa)). Mg(2+) contacts are provided by serine 278 and serine 280. N-linked (GlcNAc...) asparagine glycosylation is present at asparagine 285. Threonine 353 serves as a coordination point for Mg(2+). A glycan (N-linked (GlcNAc...) asparagine) is linked at asparagine 378. The region spanning 477-757 (LCGMVWEHRK…VLPWLKEKLQ (281 aa)) is the Peptidase S1 domain. Disulfide bonds link cysteine 478–cysteine 596, cysteine 511–cysteine 527, cysteine 599–cysteine 615, cysteine 656–cysteine 682, and cysteine 695–cysteine 725. Residues histidine 526 and aspartate 576 each act as charge relay system in the active site. Serine 699 functions as the Charge relay system in the catalytic mechanism.

Belongs to the peptidase S1 family. As to quaternary structure, monomer. Interacts with complement C3b; this interaction is dependent on the presence of Mg(2+). In terms of assembly, catalytic component of the C3 convertase of the alternative complement pathway, also named C3bBb, composed of complement factor B Bb and complement C3b. Catalytic component of the C5 convertase of the alternative complement pathway, also named C3bBb3b, composed of complement factor B Bb and additional molecules of complement C3b. Interacts to CFP; this interaction contributes to the stabilization of the active C3-convertase enzyme complex. Mg(2+) is required as a cofactor. Mn(2+) serves as cofactor. In terms of processing, cleaved by CFD following activation of the alternative complement system, generating Ba and Bb chains. Cleavage and activation takes place when CFB is already associated with complement C3b.

Its subcellular location is the secreted. The protein resides in the cell surface. The catalysed reaction is Cleavage of Arg-|-Ser bond in complement component C3 alpha-chain to yield C3a and C3b, and Arg-|-Xaa bond in complement component C5 alpha-chain to yield C5a and C5b.. Precursor of the catalytic component of the C3 and C5 convertase complexes of the alternative pathway of the complement system, a cascade of proteins that leads to phagocytosis and breakdown of pathogens and signaling that strengthens the adaptive immune system. The alternative complement pathway acts as an amplification loop that enhances other complement pathways (classical, lectin and GZMK) by promoting formation of additional C3 and C5 convertases. CFB is cleaved and activated by CFD to generate Ba and Bb chains; Bb chain constituting the catalytic component of the C3 and C5 convertases. Functionally, serine protease component of the complement C3 and C5 convertase complexes of the alternative complement pathway. Following cleavage and activation by factor D (CFD), forms the C3 convertase together with complement C3b. As part of the C3 convertase, cleaves and activates C3 into C3a anaphylatoxin and C3b opsonin, the next components of the complement pathways. When an additional complement C3b molecule binds to the C3 convertase, forms the C5 convertase, which cleaves and activates C5 into C5a anaphylatoxin and C5b component of the membrane attack complex. In terms of biological role, involved in proliferation and differentiation of preactivated B-lymphocytes, rapid spreading of peripheral blood monocytes, stimulation of lymphocyte blastogenesis and lysis of erythrocytes. The protein is Complement factor B (CFB) of Pan troglodytes (Chimpanzee).